The chain runs to 550 residues: Phosphatidylinositol 4-kinase gamma 2 (550 aa).

Ubiquitin-like domains lie at 34-111 (SVLV…YDPL) and 112-190 (LVTV…VEDT). Residues 228 to 247 (VDGLNKGSPPVRSAEGTGGT) are disordered. Residues 234–532 (GSPPVRSAEG…SVLPASSEAT (299 aa)) form the PI3K/PI4K catalytic domain. A G-loop region spans residues 240 to 246 (SAEGTGG). ATP contacts are provided by residues 241–247 (AEGTGGT), K263, and 359–362 (QMFM). A catalytic loop region spans residues 392 to 400 (ANADRHAGN). Residues 415 to 441 (PIDHGYCLPENFEDCTFEWLYWPQAKL) are activation loop. D417 lines the ATP pocket.

This sequence belongs to the PI3/PI4-kinase family. Type II PI4K subfamily.

The protein resides in the membrane. The enzyme catalyses a 1,2-diacyl-sn-glycero-3-phospho-(1D-myo-inositol) + ATP = a 1,2-diacyl-sn-glycero-3-phospho-(1D-myo-inositol 4-phosphate) + ADP + H(+). In terms of biological role, the phosphorylation of phosphatidylinositol (PI) to PI4P is the first committed step in the generation of phosphatidylinositol 4,5-bisphosphate (PIP2), a precursor of the second messenger inositol 1,4,5-trisphosphate (InsP3). This chain is Phosphatidylinositol 4-kinase gamma 2 (PI4KG2), found in Arabidopsis thaliana (Mouse-ear cress).